The following is a 612-amino-acid chain: Alpha-glycerophosphate oxidase (612 aa).

21 to 49 lines the FAD pocket; it reads DLLIIGGGITGAGVALQAAASGLDTGLIE. Residues 399–408 show a composition bias toward basic and acidic residues; the sequence is ETSTSEKELD. A disordered region spans residues 399–418; the sequence is ETSTSEKELDPSAVSRGSSF.

The protein belongs to the FAD-dependent glycerol-3-phosphate dehydrogenase family. FAD is required as a cofactor.

It localises to the cytoplasm. It catalyses the reaction sn-glycerol 3-phosphate + O2 = dihydroxyacetone phosphate + H2O2. In Streptococcus pyogenes serotype M1, this protein is Alpha-glycerophosphate oxidase (glpO).